A 524-amino-acid chain; its full sequence is Bifunctional purine biosynthesis protein PurH (524 aa).

The 144-residue stretch at 1 to 144 (MTRRALVSVS…KNSAHVGVVV (144 aa)) folds into the MGS-like domain.

The protein belongs to the PurH family.

The catalysed reaction is (6R)-10-formyltetrahydrofolate + 5-amino-1-(5-phospho-beta-D-ribosyl)imidazole-4-carboxamide = 5-formamido-1-(5-phospho-D-ribosyl)imidazole-4-carboxamide + (6S)-5,6,7,8-tetrahydrofolate. It catalyses the reaction IMP + H2O = 5-formamido-1-(5-phospho-D-ribosyl)imidazole-4-carboxamide. It functions in the pathway purine metabolism; IMP biosynthesis via de novo pathway; 5-formamido-1-(5-phospho-D-ribosyl)imidazole-4-carboxamide from 5-amino-1-(5-phospho-D-ribosyl)imidazole-4-carboxamide (10-formyl THF route): step 1/1. Its pathway is purine metabolism; IMP biosynthesis via de novo pathway; IMP from 5-formamido-1-(5-phospho-D-ribosyl)imidazole-4-carboxamide: step 1/1. This is Bifunctional purine biosynthesis protein PurH from Anaeromyxobacter dehalogenans (strain 2CP-1 / ATCC BAA-258).